A 51-amino-acid chain; its full sequence is Large ribosomal subunit protein bL33 (51 aa).

Positions 1 to 21 (MRDKIKLESSAGTGHFYTTTK) are disordered. Residues 10-20 (SAGTGHFYTTT) show a composition bias toward polar residues.

It belongs to the bacterial ribosomal protein bL33 family.

The chain is Large ribosomal subunit protein bL33 (rpmG) from Neisseria meningitidis serogroup A / serotype 4A (strain DSM 15465 / Z2491).